Consider the following 445-residue polypeptide: Methionine aminopeptidase 2 (445 aa).

The disordered stretch occupies residues 1-76 (MAAQVASGVG…KKKCTSKVQT (76 aa)). Over residues 57 to 71 (AKKKKKKTKKKKKCT) the composition is skewed to basic residues. His195 contacts substrate. Positions 215, 226, and 295 each coordinate a divalent metal cation. Residue His303 participates in substrate binding. Residues Glu331 and Glu426 each contribute to the a divalent metal cation site.

The protein belongs to the peptidase M24A family. Methionine aminopeptidase eukaryotic type 2 subfamily. Co(2+) is required as a cofactor. Zn(2+) serves as cofactor. It depends on Mn(2+) as a cofactor. The cofactor is Fe(2+).

The protein localises to the cytoplasm. It carries out the reaction Release of N-terminal amino acids, preferentially methionine, from peptides and arylamides.. Cotranslationally removes the N-terminal methionine from nascent proteins. The N-terminal methionine is often cleaved when the second residue in the primary sequence is small and uncharged (Met-Ala-, Cys, Gly, Pro, Ser, Thr, or Val). The protein is Methionine aminopeptidase 2 of Paracoccidioides lutzii (strain ATCC MYA-826 / Pb01) (Paracoccidioides brasiliensis).